Consider the following 175-residue polypeptide: UPF0398 protein SPP_0409 (175 aa).

It belongs to the UPF0398 family.

The sequence is that of UPF0398 protein SPP_0409 from Streptococcus pneumoniae (strain P1031).